The chain runs to 82 residues: ATP synthase subunit c, chloroplastic (82 aa).

The next 2 membrane-spanning stretches (helical) occupy residues 3–23 and 57–77; these read PIISAASVIAAGLAVGLAAIG and LAFMESLTIYGLVVALSLLFA.

Belongs to the ATPase C chain family. As to quaternary structure, F-type ATPases have 2 components, F(1) - the catalytic core - and F(0) - the membrane proton channel. F(1) has five subunits: alpha(3), beta(3), gamma(1), delta(1), epsilon(1). F(0) has four main subunits: a(1), b(1), b'(1) and c(10-14). The alpha and beta chains form an alternating ring which encloses part of the gamma chain. F(1) is attached to F(0) by a central stalk formed by the gamma and epsilon chains, while a peripheral stalk is formed by the delta, b and b' chains.

It localises to the plastid. Its subcellular location is the chloroplast thylakoid membrane. Its function is as follows. F(1)F(0) ATP synthase produces ATP from ADP in the presence of a proton or sodium gradient. F-type ATPases consist of two structural domains, F(1) containing the extramembraneous catalytic core and F(0) containing the membrane proton channel, linked together by a central stalk and a peripheral stalk. During catalysis, ATP synthesis in the catalytic domain of F(1) is coupled via a rotary mechanism of the central stalk subunits to proton translocation. Functionally, key component of the F(0) channel; it plays a direct role in translocation across the membrane. A homomeric c-ring of between 10-14 subunits forms the central stalk rotor element with the F(1) delta and epsilon subunits. This is ATP synthase subunit c, chloroplastic from Cyanidium caldarium (Red alga).